The sequence spans 263 residues: Putative TATA-binding protein pB263R (263 aa).

This sequence belongs to the asfivirus B263R family.

Its function is as follows. Putative TATA-binding protein. This Ornithodoros (relapsing fever ticks) protein is Putative TATA-binding protein pB263R.